The following is a 141-amino-acid chain: Large ribosomal subunit protein uL11 (141 aa).

The protein belongs to the universal ribosomal protein uL11 family. Part of the ribosomal stalk of the 50S ribosomal subunit. Interacts with L10 and the large rRNA to form the base of the stalk. L10 forms an elongated spine to which L12 dimers bind in a sequential fashion forming a multimeric L10(L12)X complex. One or more lysine residues are methylated.

In terms of biological role, forms part of the ribosomal stalk which helps the ribosome interact with GTP-bound translation factors. The protein is Large ribosomal subunit protein uL11 of Agathobacter rectalis (strain ATCC 33656 / DSM 3377 / JCM 17463 / KCTC 5835 / VPI 0990) (Eubacterium rectale).